A 354-amino-acid chain; its full sequence is Uroporphyrinogen decarboxylase (354 aa).

Substrate is bound by residues 27 to 31 (RQAGR), Phe-46, Asp-77, Tyr-154, Ser-209, and His-327.

Belongs to the uroporphyrinogen decarboxylase family. In terms of assembly, homodimer.

Its subcellular location is the cytoplasm. It carries out the reaction uroporphyrinogen III + 4 H(+) = coproporphyrinogen III + 4 CO2. Its pathway is porphyrin-containing compound metabolism; protoporphyrin-IX biosynthesis; coproporphyrinogen-III from 5-aminolevulinate: step 4/4. Its function is as follows. Catalyzes the decarboxylation of four acetate groups of uroporphyrinogen-III to yield coproporphyrinogen-III. In Pseudomonas syringae pv. tomato (strain ATCC BAA-871 / DC3000), this protein is Uroporphyrinogen decarboxylase.